The primary structure comprises 433 residues: MEKITLNPIARVEGTVNLPGSKSLSNRALLLAALAKGTTKVTNLLDSDDVRHMLNALKRLGVSYTLSDDKTVCEVQGLGRAFEWQNGLSLFLGNAGTAMRPLTAALCLANSGNESPAEIVLTGEPRMKERPIKHLVDALLQAGAEIEYLEQDGYPPLAIRNKGLHGGKVKIDGSVSSQFLTALLMAAPMSAADTEIEIIGDLVSKPYIDITLNMMKIFGVEVENRNYQRFTVKGCQQYQSPKTFLVEGDASSASYFLAAGAIKGCVKVTGVGKNSIQGDRLFADVLTAMGAKITWGEDFIRAEQGELSGVDMDMNHIPDAAMTIATAALFAKGETVIRNIYNWRVKETDRLAAMATELRKVGATVEEGEDFIRIQPLPLAEFKHAEIETYNDHRMAMCFALIALSDTPVTILDPKCTAKTFPTFFDEFSRISQ.

Positions 22, 23, and 27 each coordinate 3-phosphoshikimate. Residue Lys22 participates in phosphoenolpyruvate binding. Residues Gly96 and Arg130 each coordinate phosphoenolpyruvate. 3-phosphoshikimate-binding residues include Ser176, Ser177, Gln178, Ser204, Asp319, Asn342, and Lys346. Gln178 contacts phosphoenolpyruvate. Asp319 (proton acceptor) is an active-site residue. Arg350, Arg394, and Lys419 together coordinate phosphoenolpyruvate.

Belongs to the EPSP synthase family. Monomer.

Its subcellular location is the cytoplasm. It catalyses the reaction 3-phosphoshikimate + phosphoenolpyruvate = 5-O-(1-carboxyvinyl)-3-phosphoshikimate + phosphate. It functions in the pathway metabolic intermediate biosynthesis; chorismate biosynthesis; chorismate from D-erythrose 4-phosphate and phosphoenolpyruvate: step 6/7. In terms of biological role, catalyzes the transfer of the enolpyruvyl moiety of phosphoenolpyruvate (PEP) to the 5-hydroxyl of shikimate-3-phosphate (S3P) to produce enolpyruvyl shikimate-3-phosphate and inorganic phosphate. The protein is 3-phosphoshikimate 1-carboxyvinyltransferase of Actinobacillus succinogenes (strain ATCC 55618 / DSM 22257 / CCUG 43843 / 130Z).